The primary structure comprises 380 residues: Queuine tRNA-ribosyltransferase (380 aa).

Aspartate 93 (proton acceptor) is an active-site residue. Residues 93-97 (DSGGF), aspartate 147, glutamine 198, and glycine 225 each bind substrate. The RNA binding stretch occupies residues 256–262 (GVGLPSN). Aspartate 275 serves as the catalytic Nucleophile. The interval 280 to 284 (ARNGR) is RNA binding; important for wobble base 34 recognition. Cysteine 313, cysteine 315, cysteine 318, and histidine 344 together coordinate Zn(2+).

It belongs to the queuine tRNA-ribosyltransferase family. Homodimer. Within each dimer, one monomer is responsible for RNA recognition and catalysis, while the other monomer binds to the replacement base PreQ1. The cofactor is Zn(2+).

It carries out the reaction 7-aminomethyl-7-carbaguanine + guanosine(34) in tRNA = 7-aminomethyl-7-carbaguanosine(34) in tRNA + guanine. It functions in the pathway tRNA modification; tRNA-queuosine biosynthesis. Functionally, catalyzes the base-exchange of a guanine (G) residue with the queuine precursor 7-aminomethyl-7-deazaguanine (PreQ1) at position 34 (anticodon wobble position) in tRNAs with GU(N) anticodons (tRNA-Asp, -Asn, -His and -Tyr). Catalysis occurs through a double-displacement mechanism. The nucleophile active site attacks the C1' of nucleotide 34 to detach the guanine base from the RNA, forming a covalent enzyme-RNA intermediate. The proton acceptor active site deprotonates the incoming PreQ1, allowing a nucleophilic attack on the C1' of the ribose to form the product. After dissociation, two additional enzymatic reactions on the tRNA convert PreQ1 to queuine (Q), resulting in the hypermodified nucleoside queuosine (7-(((4,5-cis-dihydroxy-2-cyclopenten-1-yl)amino)methyl)-7-deazaguanosine). This Clostridium perfringens (strain 13 / Type A) protein is Queuine tRNA-ribosyltransferase.